Consider the following 158-residue polypeptide: Retinoic acid receptor beta (158 aa).

The span at 1–18 (RHSAQSIETQSTSSEELV) shows a compositional bias: low complexity. The disordered stretch occupies residues 1–24 (RHSAQSIETQSTSSEELVPSPPSP). The nuclear receptor DNA-binding region spans 31–106 (YKPCFVCQDK…VGMSKESVRN (76 aa)). NR C4-type zinc fingers lie at residues 34–54 (CFVCQDKSSGYHYGVSACEGC) and 70–94 (CHRDKNCVINKVTRNRCQYCRLQRC). The NR LBD domain occupies 129–158 (ELDDLTEKIRKAHQETFPSLCQLGKYTTNS).

The protein belongs to the nuclear hormone receptor family. NR1 subfamily. As to quaternary structure, heterodimer; with a RXR molecule. Binds DNA preferentially as a RAR/RXR heterodimer.

It is found in the nucleus. Its function is as follows. Receptor for retinoic acid. Retinoic acid receptors bind as heterodimers to their target response elements in response to their ligands, all-trans or 9-cis retinoic acid, and regulate gene expression in various biological processes. The RAR/RXR heterodimers bind to the retinoic acid response elements (RARE) composed of tandem 5'-AGGTCA-3' sites known as DR1-DR5. This is Retinoic acid receptor beta (RARB) from Notophthalmus viridescens (Eastern newt).